We begin with the raw amino-acid sequence, 502 residues long: Zinc finger protein 3 homolog (502 aa).

Basic and acidic residues-rich tracts occupy residues 1–13 (MGTE…PKEE) and 80–93 (PSSE…ESER). 2 disordered regions span residues 1 to 26 (MGTE…SLLE) and 47 to 103 (LEGH…NLVT). Residues Lys-6 and Lys-11 each participate in a glycyl lysine isopeptide (Lys-Gly) (interchain with G-Cter in SUMO2) cross-link. C2H2-type zinc fingers lie at residues 141 to 163 (HTCK…MRVH), 169 to 191 (FECK…LRIH), 197 to 219 (FACN…HRIH), 225 to 247 (YKCE…QRIH), 253 to 275 (YECN…QRIH), 281 to 303 (HECN…QKIH), 309 to 331 (YLCN…QRIH), 337 to 359 (YECN…IRIH), 365 to 387 (YVCK…ERIH), 393 to 415 (YECF…QRIH), 421 to 443 (HQCN…QKIH), 449 to 471 (YECS…QRIH), and 477 to 499 (YECQ…QSVH).

It belongs to the krueppel C2H2-type zinc-finger protein family.

It is found in the nucleus. Its function is as follows. May be involved in transcriptional regulation. The polypeptide is Zinc finger protein 3 homolog (ZFP3) (Homo sapiens (Human)).